Consider the following 144-residue polypeptide: ATP synthase epsilon chain (144 aa).

This sequence belongs to the ATPase epsilon chain family. In terms of assembly, F-type ATPases have 2 components, CF(1) - the catalytic core - and CF(0) - the membrane proton channel. CF(1) has five subunits: alpha(3), beta(3), gamma(1), delta(1), epsilon(1). CF(0) has three main subunits: a, b and c.

It localises to the cell inner membrane. Functionally, produces ATP from ADP in the presence of a proton gradient across the membrane. This chain is ATP synthase epsilon chain, found in Ectopseudomonas mendocina (strain ymp) (Pseudomonas mendocina).